A 521-amino-acid polypeptide reads, in one-letter code: Cytochrome P450 1A1 (521 aa).

A substrate-binding site is contributed by phenylalanine 229. Cysteine 463 is a binding site for heme.

The protein belongs to the cytochrome P450 family. Heme is required as a cofactor.

It localises to the endoplasmic reticulum membrane. The protein localises to the microsome membrane. It catalyses the reaction an organic molecule + reduced [NADPH--hemoprotein reductase] + O2 = an alcohol + oxidized [NADPH--hemoprotein reductase] + H2O + H(+). Its function is as follows. Cytochromes P450 are a group of heme-thiolate monooxygenases. They oxidize a variety of structurally unrelated compounds, including steroids, fatty acids, and xenobiotics. In Chaetodon capistratus (Four-eye butterflyfish), this protein is Cytochrome P450 1A1 (cyp1a1).